The sequence spans 396 residues: S-adenosylmethionine synthase (396 aa).

Residue H16 participates in ATP binding. D18 provides a ligand contact to Mg(2+). K(+) is bound at residue E44. 2 residues coordinate L-methionine: E57 and Q100. The interval 100-110 (QSVDIAQGVDR) is flexible loop. ATP is bound by residues 165 to 167 (DAK), D240, 246 to 247 (RK), A263, and K267. D240 lines the L-methionine pocket. Residue K271 participates in L-methionine binding.

It belongs to the AdoMet synthase family. In terms of assembly, homotetramer; dimer of dimers. Mg(2+) is required as a cofactor. Requires K(+) as cofactor.

The protein resides in the cytoplasm. The enzyme catalyses L-methionine + ATP + H2O = S-adenosyl-L-methionine + phosphate + diphosphate. Its pathway is amino-acid biosynthesis; S-adenosyl-L-methionine biosynthesis; S-adenosyl-L-methionine from L-methionine: step 1/1. Catalyzes the formation of S-adenosylmethionine (AdoMet) from methionine and ATP. The overall synthetic reaction is composed of two sequential steps, AdoMet formation and the subsequent tripolyphosphate hydrolysis which occurs prior to release of AdoMet from the enzyme. This chain is S-adenosylmethionine synthase, found in Pseudomonas entomophila (strain L48).